Consider the following 99-residue polypeptide: Prostate and testis expressed protein 4 (99 aa).

The N-terminal stretch at 1–23 is a signal peptide; that stretch reads MNSVTKISTLLIVILSFLCFVEG. In terms of domain architecture, UPAR/Ly6 spans 24 to 99; that stretch reads LICNSCEKSR…CCEKNLCNSF (76 aa). 4 disulfides stabilise this stretch: Cys-26/Cys-52, Cys-29/Cys-37, Cys-44/Cys-70, and Cys-74/Cys-90.

As to expression, expressed in prostate, testis, eye, kidney and skeletal muscle. Expressed in the dorsal lobe of prostate. Not expressed in the ventral lobe of prostate.

Its subcellular location is the secreted. Enhances sperm motility. Binds to calmodulin and inhibits calcium transport into spermatozoa. May modulate the function of nicotinic acetylcholine receptors. The protein is Prostate and testis expressed protein 4 (Pate4) of Mus musculus (Mouse).